Reading from the N-terminus, the 325-residue chain is Biotin synthase (325 aa).

A Radical SAM core domain is found at 49–267 (TQVQISTLLS…IAAARISMPR (219 aa)). Residues Cys64, Cys68, and Cys71 each coordinate [4Fe-4S] cluster. [2Fe-2S] cluster contacts are provided by Cys108, Cys139, Cys199, and Arg271.

This sequence belongs to the radical SAM superfamily. Biotin synthase family. As to quaternary structure, homodimer. The cofactor is [4Fe-4S] cluster. It depends on [2Fe-2S] cluster as a cofactor.

It carries out the reaction (4R,5S)-dethiobiotin + (sulfur carrier)-SH + 2 reduced [2Fe-2S]-[ferredoxin] + 2 S-adenosyl-L-methionine = (sulfur carrier)-H + biotin + 2 5'-deoxyadenosine + 2 L-methionine + 2 oxidized [2Fe-2S]-[ferredoxin]. The protein operates within cofactor biosynthesis; biotin biosynthesis; biotin from 7,8-diaminononanoate: step 2/2. Catalyzes the conversion of dethiobiotin (DTB) to biotin by the insertion of a sulfur atom into dethiobiotin via a radical-based mechanism. This chain is Biotin synthase, found in Acidiphilium cryptum (strain JF-5).